A 291-amino-acid chain; its full sequence is Gamma-sarcoglycan (291 aa).

The helical; Signal-anchor for type II membrane protein transmembrane segment at Leu-38 to Leu-58 threads the bilayer. Over Arg-59–Leu-291 the chain is Extracellular. Asn-110 carries an N-linked (GlcNAc...) asparagine glycan. 2 disulfide bridges follow: Cys-265–Cys-290 and Cys-267–Cys-283.

Belongs to the sarcoglycan beta/delta/gamma/zeta family. In terms of assembly, interacts with the syntrophin SNTA1. Cross-link to form 2 major subcomplexes: one consisting of SGCB, SGCD and SGCG and the other consisting of SGCB and SGCD. The association between SGCB and SGCG is particularly strong while SGCA is loosely associated with the other sarcoglycans. Interacts with FLNC. In terms of processing, disulfide bonds are present.

It localises to the cell membrane. Its subcellular location is the sarcolemma. It is found in the cytoplasm. The protein resides in the cytoskeleton. Its function is as follows. Component of the sarcoglycan complex, a subcomplex of the dystrophin-glycoprotein complex which forms a link between the F-actin cytoskeleton and the extracellular matrix. The sequence is that of Gamma-sarcoglycan (SGCG) from Bos taurus (Bovine).